The primary structure comprises 210 residues: Calcineurin B-like protein 4 (210 aa).

Glycine 2 carries the N-myristoyl glycine lipid modification. EF-hand domains lie at 31-66 (EVEA…RNSR), 67-102 (KANL…FHPK), 104-139 (PKSE…LLDE), and 148-183 (AVEA…NPAS). Aspartate 161, asparagine 163, aspartate 165, arginine 167, and glutamate 172 together coordinate Ca(2+).

The protein belongs to the calcineurin regulatory subunit family. Homodimer. Interacts with CIPK24. As to expression, expressed in leaves.

The protein localises to the cell membrane. Functionally, acts as a calcium sensor involved in the regulatory pathway for the control of intracellular Na(+) and K(+) homeostasis and salt tolerance. Operates in synergy with CIPK24 to activate the plasma membrane Na(+)/H(+) antiporter SOS1. May function as positive regulator of salt stress responses. CBL proteins interact with CIPK serine-threonine protein kinases. Binding of a CBL protein to the regulatory NAF domain of a CIPK protein lead to the activation of the kinase in a calcium-dependent manner. The protein is Calcineurin B-like protein 4 (CBL4) of Oryza sativa subsp. japonica (Rice).